The chain runs to 569 residues: Isochorismate synthase 1, chloroplastic (569 aa).

A chloroplast-targeting transit peptide spans 1–45 (MASLQFSSQFLGSNTKTHSSIISISRSYSPTPFTRFSRKKYESCS).

It belongs to the isochorismate synthase family. Monomer. The cofactor is Mg(2+). As to expression, leaves.

The protein resides in the plastid. It is found in the chloroplast. The enzyme catalyses chorismate = isochorismate. It participates in siderophore biosynthesis; salicylate biosynthesis. In terms of biological role, isochorismate synthase involved in the synthesis of salicylic acid (SA) required for both local and systemic acquired resistance (LAR and SAR) while SA synthesized through the phenylalanine ammonium lyase (PAL) pathway seems to potentiate plant cell death. Also involved in phylloquinone (vitamin K1) synthesis. Has no isochorismate pyruvate lyase (IPL) activity. This chain is Isochorismate synthase 1, chloroplastic (ICS1), found in Arabidopsis thaliana (Mouse-ear cress).